The primary structure comprises 394 residues: S-adenosylmethionine synthase (394 aa).

H15 contributes to the ATP binding site. D17 provides a ligand contact to Mg(2+). E43 serves as a coordination point for K(+). Residues E56 and Q99 each contribute to the L-methionine site. The tract at residues 99–109 is flexible loop; that stretch reads QSPDIALGVNK. ATP contacts are provided by residues 173-175, 239-240, D248, 254-255, A271, and K275; these read DGK, RF, and RK. D248 is an L-methionine binding site. Residue K279 coordinates L-methionine.

Belongs to the AdoMet synthase family. As to quaternary structure, homotetramer; dimer of dimers. It depends on Mg(2+) as a cofactor. Requires K(+) as cofactor.

It localises to the cytoplasm. The enzyme catalyses L-methionine + ATP + H2O = S-adenosyl-L-methionine + phosphate + diphosphate. Its pathway is amino-acid biosynthesis; S-adenosyl-L-methionine biosynthesis; S-adenosyl-L-methionine from L-methionine: step 1/1. In terms of biological role, catalyzes the formation of S-adenosylmethionine (AdoMet) from methionine and ATP. The overall synthetic reaction is composed of two sequential steps, AdoMet formation and the subsequent tripolyphosphate hydrolysis which occurs prior to release of AdoMet from the enzyme. The polypeptide is S-adenosylmethionine synthase (Kosmotoga olearia (strain ATCC BAA-1733 / DSM 21960 / TBF 19.5.1)).